Consider the following 1013-residue polypeptide: GPI ethanolamine phosphate transferase 3 (1013 aa).

The helical transmembrane segment at 41–61 threads the bilayer; sequence TLYIFLYSALAALQFIAIAFF. 5 N-linked (GlcNAc...) asparagine glycosylation sites follow: Asn184, Asn205, Asn336, Asn399, and Asn423. 3 helical membrane passes run 447–467, 484–504, and 515–535; these read YYSI…LITI, VPTI…VFYV, and LWAS…VPIF. Asn539 is a glycosylation site (N-linked (GlcNAc...) asparagine). 4 consecutive transmembrane segments (helical) span residues 558–578, 582–602, 643–663, and 682–702; these read VAAF…FTIW, IVSF…VFLP, IVGG…SLIT, and NYSF…PACI. Residue Asn707 is glycosylated (N-linked (GlcNAc...) asparagine). A helical membrane pass occupies residues 715 to 735; sequence AAPIWIGMLMKSILFVNFIYW. Residues Asn742, Asn750, and Asn755 are each glycosylated (N-linked (GlcNAc...) asparagine). 7 consecutive transmembrane segments (helical) span residues 761–781, 802–822, 825–845, 868–888, 899–919, 943–963, and 977–997; these read IVVG…PLCI, NAYG…ILLF, PLAQ…LEIF, FFST…GFIL, LGIV…VALL, GMLL…VTNF, and FMFA…ITIA.

The protein belongs to the PIGG/PIGN/PIGO family. PIGO subfamily.

Its subcellular location is the endoplasmic reticulum membrane. Its pathway is glycolipid biosynthesis; glycosylphosphatidylinositol-anchor biosynthesis. Involved in glycosylphosphatidylinositol-anchor biosynthesis. Transfers ethanolamine phosphate to the GPI third mannose which links the GPI-anchor to the C-terminus of the proteins by an amide bond. Involved in cell wall biosynthesis. The protein is GPI ethanolamine phosphate transferase 3 (GPI13) of Eremothecium gossypii (strain ATCC 10895 / CBS 109.51 / FGSC 9923 / NRRL Y-1056) (Yeast).